The following is a 90-amino-acid chain: Small ribosomal subunit protein bS16 (90 aa).

The protein belongs to the bacterial ribosomal protein bS16 family.

In Geobacillus kaustophilus (strain HTA426), this protein is Small ribosomal subunit protein bS16.